We begin with the raw amino-acid sequence, 426 residues long: 3-phosphoshikimate 1-carboxyvinyltransferase (426 aa).

3-phosphoshikimate contacts are provided by lysine 23, serine 24, and arginine 28. Position 23 (lysine 23) interacts with phosphoenolpyruvate. Residues glycine 96 and arginine 124 each contribute to the phosphoenolpyruvate site. 3-phosphoshikimate contacts are provided by threonine 170, serine 171, glutamine 172, serine 198, aspartate 314, and lysine 341. Glutamine 172 contributes to the phosphoenolpyruvate binding site. The active-site Proton acceptor is aspartate 314. The phosphoenolpyruvate site is built by arginine 345, arginine 386, and lysine 411.

Belongs to the EPSP synthase family. As to quaternary structure, monomer.

It localises to the cytoplasm. It catalyses the reaction 3-phosphoshikimate + phosphoenolpyruvate = 5-O-(1-carboxyvinyl)-3-phosphoshikimate + phosphate. It participates in metabolic intermediate biosynthesis; chorismate biosynthesis; chorismate from D-erythrose 4-phosphate and phosphoenolpyruvate: step 6/7. Catalyzes the transfer of the enolpyruvyl moiety of phosphoenolpyruvate (PEP) to the 5-hydroxyl of shikimate-3-phosphate (S3P) to produce enolpyruvyl shikimate-3-phosphate and inorganic phosphate. In Nostoc punctiforme (strain ATCC 29133 / PCC 73102), this protein is 3-phosphoshikimate 1-carboxyvinyltransferase.